We begin with the raw amino-acid sequence, 971 residues long: GEM-interacting protein (971 aa).

Serine 19 carries the post-translational modification Phosphoserine. Disordered stretches follow at residues 41–79 (AGDP…PEGP), 231–267 (LRAR…AQAK), and 383–476 (DTKK…IENG). Residues 44–56 (PVRREDLEPDKAD) are compositionally biased toward basic and acidic residues. Residues 59–69 (TVVTEENSEAS) are compositionally biased toward polar residues. Serine 75, serine 235, serine 238, serine 247, serine 436, and serine 440 each carry phosphoserine. An F-BAR domain is found at 85–348 (EELDLRLIRT…CCVPFEPGQR (264 aa)). Positions 458 to 471 (SSDDFEERDPDLGD) are enriched in acidic residues. The segment at 492–536 (THRLRRLRGPAKCRECEAFMVSGTECEECFLTCHKRCLETLLILC) adopts a Phorbol-ester/DAG-type zinc-finger fold. In terms of domain architecture, Rho-GAP spans 553–756 (LQLPRDFPEE…FLIVHYEQIF (204 aa)). Threonine 659 carries the post-translational modification Phosphothreonine. A disordered region spans residues 799–865 (IALDSSPDPK…LGAQSRGHFS (67 aa)). The span at 805-817 (PDPKHHSALEKCP) shows a compositional bias: basic and acidic residues. 3 positions are modified to phosphoserine: serine 884, serine 908, and serine 924.

As to quaternary structure, interacts with GEM through its N-terminal.

Its function is as follows. Stimulates, in vitro and in vivo, the GTPase activity of RhoA. In Mus musculus (Mouse), this protein is GEM-interacting protein (Gmip).